Consider the following 429-residue polypeptide: N5-carboxyaminoimidazole ribonucleotide synthase (429 aa).

ATP contacts are provided by residues Lys-117, Lys-157, 194-197 (EERV), Glu-202, and 280-281 (NE). Residues 121-310 (RQRLAAAGVA…QFEQHLRAVL (190 aa)) form the ATP-grasp domain. The tract at residues 406 to 429 (RASDDAVGVPPACGGRSDEEERRL) is disordered.

This sequence belongs to the PurK/PurT family. In terms of assembly, homodimer.

It carries out the reaction 5-amino-1-(5-phospho-beta-D-ribosyl)imidazole + hydrogencarbonate + ATP = 5-carboxyamino-1-(5-phospho-D-ribosyl)imidazole + ADP + phosphate + 2 H(+). Its pathway is purine metabolism; IMP biosynthesis via de novo pathway; 5-amino-1-(5-phospho-D-ribosyl)imidazole-4-carboxylate from 5-amino-1-(5-phospho-D-ribosyl)imidazole (N5-CAIR route): step 1/2. Catalyzes the ATP-dependent conversion of 5-aminoimidazole ribonucleotide (AIR) and HCO(3)(-) to N5-carboxyaminoimidazole ribonucleotide (N5-CAIR). The chain is N5-carboxyaminoimidazole ribonucleotide synthase from Mycobacterium bovis (strain ATCC BAA-935 / AF2122/97).